A 249-amino-acid chain; its full sequence is uncharacterized protein (249 aa).

The helical transmembrane segment at 3 to 23 (WYWIGLLIVVVLFLLSAVRIV) threads the bilayer.

This sequence belongs to the band 7/mec-2 family.

The protein localises to the membrane. This is an uncharacterized protein from Archaeoglobus fulgidus (strain ATCC 49558 / DSM 4304 / JCM 9628 / NBRC 100126 / VC-16).